The chain runs to 85 residues: Phosphocarrier protein HPr (85 aa).

The HPr domain maps to 1–85 (MFQNQVKITA…HLSLIMTELE (85 aa)). His-15 functions as the Pros-phosphohistidine intermediate in the catalytic mechanism.

It belongs to the HPr family.

The protein resides in the cytoplasm. In terms of biological role, general (non sugar-specific) component of the phosphoenolpyruvate-dependent sugar phosphotransferase system (sugar PTS). This major carbohydrate active-transport system catalyzes the phosphorylation of incoming sugar substrates concomitantly with their translocation across the cell membrane. The phosphoryl group from phosphoenolpyruvate (PEP) is transferred to the phosphoryl carrier protein HPr by enzyme I. Phospho-HPr then transfers it to the PTS EIIA domain. This is Phosphocarrier protein HPr (ptsH) from Buchnera aphidicola subsp. Acyrthosiphon pisum (strain APS) (Acyrthosiphon pisum symbiotic bacterium).